We begin with the raw amino-acid sequence, 254 residues long: Nickel import ATP-binding protein NikD (254 aa).

In terms of domain architecture, ABC transporter spans 2 to 241 (PQQIELRNIA…PKHAVTRSLV (240 aa)). Residue 36 to 43 (GGSGSGKS) coordinates ATP.

The protein belongs to the ABC transporter superfamily. Nickel importer (TC 3.A.1.5.3) family. In terms of assembly, the complex is composed of two ATP-binding proteins (NikD and NikE), two transmembrane proteins (NikB and NikC) and a solute-binding protein (NikA).

The protein resides in the cell inner membrane. It carries out the reaction Ni(2+)(out) + ATP + H2O = Ni(2+)(in) + ADP + phosphate + H(+). Its function is as follows. Part of the ABC transporter complex NikABCDE involved in nickel import. Responsible for energy coupling to the transport system. The protein is Nickel import ATP-binding protein NikD of Shigella sonnei (strain Ss046).